A 310-amino-acid chain; its full sequence is Proline iminopeptidase (310 aa).

Residues 33-290 (PVIFLHGGPG…RVVQAGHCAF (258 aa)) form the AB hydrolase-1 domain. The Nucleophile role is filled by S107. D260 is an active-site residue. H287 serves as the catalytic Proton donor.

The protein belongs to the peptidase S33 family.

It is found in the cytoplasm. It catalyses the reaction Release of N-terminal proline from a peptide.. Functionally, hydrolyzes peptides having the structure Pro-Y-Z to yield free proline. Also hydrolyzes the dipeptide Pro-Gly. The chain is Proline iminopeptidase (pip) from Neisseria gonorrhoeae.